The following is a 138-amino-acid chain: Ribonuclease kappa-A (138 aa).

Residues 1–24 form the signal peptide; it reads MVLYFSPVLTFFLANFFNSKSTTT. Residues 25-75 are Extracellular-facing; that stretch reads ENLQVFLVENQHRDSKRKINPTFSKKGIEVRQQNENLWSKIVALRFDYSVW. Residues 76–96 traverse the membrane as a helical segment; sequence GIIQLVLMMGLFFYINSVALI. Residues 97-138 are Cytoplasmic-facing; the sequence is EDLPIDEEFNSVEEFYTAATSAYNQNAYTVGLPVHLCAYASI.

It belongs to the RNase K family.

It localises to the membrane. Functionally, endoribonuclease. The sequence is that of Ribonuclease kappa-A from Ceratitis capitata (Mediterranean fruit fly).